The chain runs to 183 residues: CASP-like protein UU1 (183 aa).

The Cytoplasmic portion of the chain corresponds to 1–33 (MEESQQQSTKFDAPPSPYVPSRVYLAQIYWKKP). A helical membrane pass occupies residues 34–54 (AIVVLRVLQFVFSLIAFSVMA). Residues 55-72 (DLLHDVQGSIKSLSYTVA) are Extracellular-facing. Residues 73-93 (IGVLACAYALAQLSFSLWCVI) traverse the membrane as a helical segment. Residues 94–118 (RGATSSSGVTPLYQYATFICDQMST) are Cytoplasmic-facing. The chain crosses the membrane as a helical span at residues 119–139 (YFLISAASATATLIDVSGVCG). Over 140-156 (SNGSGTNLCSRSTASVT) the chain is Extracellular. A glycan (N-linked (GlcNAc...) asparagine) is linked at N141. The helical transmembrane segment at 157–177 (FAFLAFLAFSASSVLTGYYLV) threads the bilayer. The Cytoplasmic portion of the chain corresponds to 178-183 (KCILKA).

This sequence belongs to the Casparian strip membrane proteins (CASP) family. Homodimer and heterodimers.

Its subcellular location is the cell membrane. This Selaginella moellendorffii (Spikemoss) protein is CASP-like protein UU1.